The following is a 148-amino-acid chain: Calcium-permeable cation-selective channel WeiTsing (148 aa).

The Cytoplasmic segment spans residues Met-1–Ser-25. A helical membrane pass occupies residues Ala-26 to Val-46. Over Ser-47–Ser-51 the chain is Lumenal. A helical membrane pass occupies residues Val-52–Val-72. The Cytoplasmic portion of the chain corresponds to Leu-73–Arg-90. Residues Leu-91 to Val-110 form a helical membrane-spanning segment. The Lumenal portion of the chain corresponds to Val-111–Ser-116. The chain crosses the membrane as a helical span at residues Ile-117 to Leu-133. Residues Glu-134–Val-148 are Cytoplasmic-facing.

Forms pentamers with a central pore to produce an ion channel.

Its subcellular location is the endoplasmic reticulum membrane. The catalysed reaction is Ca(2+)(in) = Ca(2+)(out). It catalyses the reaction Na(+)(in) = Na(+)(out). Functionally, calcium-permeable cation-selective channel conferring a broad-spectrum clubroot resistance by supporting cytosolic Ca(2+) increase in root pericycle cells. Triggers immunity toward fungal pathogens such as Plasmodiophora brassicae (Pb) and induces defenses. Also permeable to sodium ion Na(+) and possibly other cations. This chain is Calcium-permeable cation-selective channel WeiTsing, found in Arabidopsis thaliana (Mouse-ear cress).